Here is a 31-residue protein sequence, read N- to C-terminus: Cyclotide cter-C (31 aa).

The cyclopeptide (Gly-Asp) cross-link spans 1-31 (GVPCAESCVWIPCTVTALLGCSCKDKVCYLD). 3 cysteine pairs are disulfide-bonded: Cys4-Cys21, Cys8-Cys23, and Cys13-Cys28.

In terms of processing, contains 3 disulfide bonds. This is a cyclic peptide.

In terms of biological role, probably participates in a plant defense mechanism. The protein is Cyclotide cter-C of Clitoria ternatea (Butterfly pea).